Here is a 122-residue protein sequence, read N- to C-terminus: MARIAGVNIPTNKRVEIALTYIHGIGPTTAKKIVTKLGIAPERRVQDLSDNEVLQIREAIDADYTVEGDLRRQVAMNIKRLMDLACYRGLRHRKGLPVRGQRTHTNARTRKGKAKPIAGKKK.

The disordered stretch occupies residues 95–122 (GLPVRGQRTHTNARTRKGKAKPIAGKKK).

This sequence belongs to the universal ribosomal protein uS13 family. As to quaternary structure, part of the 30S ribosomal subunit. Forms a loose heterodimer with protein S19. Forms two bridges to the 50S subunit in the 70S ribosome.

In terms of biological role, located at the top of the head of the 30S subunit, it contacts several helices of the 16S rRNA. In the 70S ribosome it contacts the 23S rRNA (bridge B1a) and protein L5 of the 50S subunit (bridge B1b), connecting the 2 subunits; these bridges are implicated in subunit movement. Contacts the tRNAs in the A and P-sites. This Zymomonas mobilis subsp. mobilis (strain ATCC 31821 / ZM4 / CP4) protein is Small ribosomal subunit protein uS13.